The primary structure comprises 392 residues: GTPase Obg (392 aa).

Residues 1–159 enclose the Obg domain; it reads MKFVDEAEIR…RNLKLELMLL (159 aa). A disordered region spans residues 121–146; it reads GFHGLGNTRFKSSTNRAPRQKTNGTP. A compositionally biased stretch (polar residues) spans 129–145; the sequence is RFKSSTNRAPRQKTNGT. The OBG-type G domain maps to 160-333; the sequence is ADVGLLGMPN…LCNDVMDFIE (174 aa). GTP is bound by residues 166-173, 191-195, 213-216, 283-286, and 314-316; these read GMPNAGKS, FTTLV, DIPG, NKVD, and SAF. Positions 173 and 193 each coordinate Mg(2+).

It belongs to the TRAFAC class OBG-HflX-like GTPase superfamily. OBG GTPase family. As to quaternary structure, monomer. Mg(2+) serves as cofactor.

It is found in the cytoplasm. An essential GTPase which binds GTP, GDP and possibly (p)ppGpp with moderate affinity, with high nucleotide exchange rates and a fairly low GTP hydrolysis rate. Plays a role in control of the cell cycle, stress response, ribosome biogenesis and in those bacteria that undergo differentiation, in morphogenesis control. The polypeptide is GTPase Obg (Alteromonas mediterranea (strain DSM 17117 / CIP 110805 / LMG 28347 / Deep ecotype)).